Reading from the N-terminus, the 83-residue chain is Putative membrane protein insertion efficiency factor (83 aa).

It belongs to the UPF0161 family.

It localises to the cell membrane. Its function is as follows. Could be involved in insertion of integral membrane proteins into the membrane. In Streptococcus thermophilus (strain ATCC BAA-250 / LMG 18311), this protein is Putative membrane protein insertion efficiency factor.